Consider the following 207-residue polypeptide: Ribonuclease HII (207 aa).

The RNase H type-2 domain occupies 12 to 201 (ALVAGVDEVG…VRELLDVVSI (190 aa)). The a divalent metal cation site is built by D18, E19, and D110.

This sequence belongs to the RNase HII family. It depends on Mn(2+) as a cofactor. Mg(2+) is required as a cofactor.

The protein resides in the cytoplasm. It carries out the reaction Endonucleolytic cleavage to 5'-phosphomonoester.. In terms of biological role, endonuclease that specifically degrades the RNA of RNA-DNA hybrids. In Azotobacter vinelandii (strain DJ / ATCC BAA-1303), this protein is Ribonuclease HII.